The primary structure comprises 132 residues: MSLSDPLGDMLTRIRNAQRARHAACVAPASKLRANVLEALRREGYIRGYAQEDLRKGVAQLRIELKYLDGEPVIKEIHRVSKPGRRVYSKIKELPRVYAGLGVSILSTPRGVLSDAEARAANVGGEVLCRVF.

It belongs to the universal ribosomal protein uS8 family. In terms of assembly, part of the 30S ribosomal subunit. Contacts proteins S5 and S12.

One of the primary rRNA binding proteins, it binds directly to 16S rRNA central domain where it helps coordinate assembly of the platform of the 30S subunit. The chain is Small ribosomal subunit protein uS8 from Gluconacetobacter diazotrophicus (strain ATCC 49037 / DSM 5601 / CCUG 37298 / CIP 103539 / LMG 7603 / PAl5).